The chain runs to 356 residues: Transcription factor ATOH1 (356 aa).

The span at 1-21 (MSRLLHAEEWAEVKELGDHHR) shows a compositional bias: basic and acidic residues. Disordered stretches follow at residues 1-56 (MSRL…PELS) and 92-125 (SEAA…GPVK). Residues 26-40 (HHLPQPPPPPPPQPP) show a composition bias toward pro residues. Residues 96 to 109 (APRDEVDGRGELVR) show a composition bias toward basic and acidic residues. The segment covering 110–124 (RSSGGASSSKSPGPV) has biased composition (low complexity). The region spanning 161-213 (QRRLAANARERRRMHGLNHAFDQLRNVIPSFNNDKKLSKYETLQMAQIYINAL) is the bHLH domain. Disordered stretches follow at residues 218–279 (QTPS…TRFS) and 314–356 (SPSL…DEAS). The span at 252–266 (NATAAGAQQASGGSQ) shows a compositional bias: low complexity. The segment covering 337-356 (HRSDGEFSPHSHYSDSDEAS) has biased composition (basic and acidic residues).

As to quaternary structure, efficient DNA binding requires dimerization with another bHLH protein.

The protein localises to the nucleus. Its function is as follows. Transcriptional regulator. Activates E box-dependent transcription in collaboration with TCF3/E47, but the activity is completely antagonized by the negative regulator of neurogenesis HES1. Plays a role in the differentiation of subsets of neural cells by activating E box-dependent transcription. This chain is Transcription factor ATOH1, found in Pan troglodytes (Chimpanzee).